Here is a 226-residue protein sequence, read N- to C-terminus: Deoxyribose-phosphate aldolase (226 aa).

The active-site Proton donor/acceptor is Asp-95. Lys-157 functions as the Schiff-base intermediate with acetaldehyde in the catalytic mechanism. Lys-186 functions as the Proton donor/acceptor in the catalytic mechanism.

The protein belongs to the DeoC/FbaB aldolase family. DeoC type 1 subfamily.

The protein resides in the cytoplasm. It catalyses the reaction 2-deoxy-D-ribose 5-phosphate = D-glyceraldehyde 3-phosphate + acetaldehyde. The protein operates within carbohydrate degradation; 2-deoxy-D-ribose 1-phosphate degradation; D-glyceraldehyde 3-phosphate and acetaldehyde from 2-deoxy-alpha-D-ribose 1-phosphate: step 2/2. With respect to regulation, partially inhibited by acetaldehyde. After incubation for 2, 4 and 6 hours in 300 mM acetaldehyde at 25 degrees Celsius, retains approximately 61.32%, 42.33% and 34.73% of the initial 2-deoxy-D-ribose-5-phosphate (DR5P) cleavage activity, respectively. Functionally, catalyzes a reversible aldol reaction between acetaldehyde and D-glyceraldehyde 3-phosphate to generate 2-deoxy-D-ribose 5-phosphate. In terms of biological role, in vitro, DERA can catalyze the aldol condensation of chloroacetaldehyde (CHAD) and acetaldehyde (ACD), yielding (S)-4-chloro-3-hydroxybutanal ((S)-CHB), which can combine with another aldehyde to form (3R,5S)-6-chloro-2,4,6-trideoxyhexapyranose (CTeHP), a key intermediate for statin drugs. The protein is Deoxyribose-phosphate aldolase of Pseudomonas syringae pv. syringae (strain B728a).